Reading from the N-terminus, the 365-residue chain is Heat-inducible transcription repressor HrcA (365 aa).

It belongs to the HrcA family.

Negative regulator of class I heat shock genes (grpE-dnaK-dnaJ and groELS operons). Prevents heat-shock induction of these operons. This chain is Heat-inducible transcription repressor HrcA, found in Trichormus variabilis (strain ATCC 29413 / PCC 7937) (Anabaena variabilis).